Consider the following 1019-residue polypeptide: Exportin-T (1019 aa).

It belongs to the exportin family.

Its subcellular location is the nucleus. The protein localises to the cytoplasm. Functionally, tRNA nucleus export receptor which facilitates tRNA translocation across the nuclear pore complex. Involved in pre-tRNA splicing, probably by affecting the interaction of pre-tRNA with splicing endonuclease. This is Exportin-T (LOS1) from Chaetomium globosum (strain ATCC 6205 / CBS 148.51 / DSM 1962 / NBRC 6347 / NRRL 1970) (Soil fungus).